The primary structure comprises 432 residues: Enolase (432 aa).

(2R)-2-phosphoglycerate is bound at residue Q167. The active-site Proton donor is E209. 3 residues coordinate Mg(2+): D246, E290, and D317. (2R)-2-phosphoglycerate is bound by residues K342, R371, S372, and K393. K342 acts as the Proton acceptor in catalysis.

Belongs to the enolase family. Component of the RNA degradosome, a multiprotein complex involved in RNA processing and mRNA degradation. Mg(2+) is required as a cofactor.

The protein resides in the cytoplasm. The protein localises to the secreted. Its subcellular location is the cell surface. The enzyme catalyses (2R)-2-phosphoglycerate = phosphoenolpyruvate + H2O. It functions in the pathway carbohydrate degradation; glycolysis; pyruvate from D-glyceraldehyde 3-phosphate: step 4/5. Functionally, catalyzes the reversible conversion of 2-phosphoglycerate (2-PG) into phosphoenolpyruvate (PEP). It is essential for the degradation of carbohydrates via glycolysis. This Klebsiella pneumoniae (strain 342) protein is Enolase.